A 452-amino-acid polypeptide reads, in one-letter code: Tissue alpha-L-fucosidase (452 aa).

Positions 1 to 17 are cleaved as a signal peptide; it reads MLLLLLLLLVAAAQAVA. 4 N-linked (GlcNAc...) asparagine glycosylation sites follow: N227, N254, N368, and N378.

It belongs to the glycosyl hydrolase 29 family. In terms of assembly, homotetramer.

Its subcellular location is the lysosome. The enzyme catalyses an alpha-L-fucoside + H2O = L-fucose + an alcohol. It catalyses the reaction a neolactoside IV(2)-alpha-Fuc-nLc4Cer(d18:1(4E)) + H2O = a neolactoside nLc4Cer(d18:1(4E)) + L-fucose. It carries out the reaction a neolactoside IV(2)-alpha-Fuc-nLc4Cer(d18:0) + H2O = a neolactoside nLc4Cer(d18:0) + L-fucose. Its function is as follows. Alpha-L-fucosidase is responsible for hydrolyzing the alpha-1,6-linked fucose joined to the reducing-end N-acetylglucosamine of the carbohydrate moieties of glycoproteins. The protein is Tissue alpha-L-fucosidase (Fuca1) of Mus musculus (Mouse).